Here is a 338-residue protein sequence, read N- to C-terminus: Ketol-acid reductoisomerase (NADP(+)) (338 aa).

Positions 1 to 181 (MKVFYDKDAD…GGGRAGIIET (181 aa)) constitute a KARI N-terminal Rossmann domain. Residues 24–27 (YGSQ), arginine 47, and serine 52 contribute to the NADP(+) site. Residue histidine 107 is part of the active site. Glycine 133 provides a ligand contact to NADP(+). The region spanning 182–327 (NFREETETDL…AKLRSMMPWI (146 aa)) is the KARI C-terminal knotted domain. Aspartate 190, glutamate 194, glutamate 226, and glutamate 230 together coordinate Mg(2+). Substrate is bound at residue serine 251.

Belongs to the ketol-acid reductoisomerase family. Mg(2+) serves as cofactor.

It catalyses the reaction (2R)-2,3-dihydroxy-3-methylbutanoate + NADP(+) = (2S)-2-acetolactate + NADPH + H(+). The enzyme catalyses (2R,3R)-2,3-dihydroxy-3-methylpentanoate + NADP(+) = (S)-2-ethyl-2-hydroxy-3-oxobutanoate + NADPH + H(+). It functions in the pathway amino-acid biosynthesis; L-isoleucine biosynthesis; L-isoleucine from 2-oxobutanoate: step 2/4. The protein operates within amino-acid biosynthesis; L-valine biosynthesis; L-valine from pyruvate: step 2/4. Involved in the biosynthesis of branched-chain amino acids (BCAA). Catalyzes an alkyl-migration followed by a ketol-acid reduction of (S)-2-acetolactate (S2AL) to yield (R)-2,3-dihydroxy-isovalerate. In the isomerase reaction, S2AL is rearranged via a Mg-dependent methyl migration to produce 3-hydroxy-3-methyl-2-ketobutyrate (HMKB). In the reductase reaction, this 2-ketoacid undergoes a metal-dependent reduction by NADPH to yield (R)-2,3-dihydroxy-isovalerate. The sequence is that of Ketol-acid reductoisomerase (NADP(+)) from Paraburkholderia phytofirmans (strain DSM 17436 / LMG 22146 / PsJN) (Burkholderia phytofirmans).